Here is a 124-residue protein sequence, read N- to C-terminus: Small ribosomal subunit protein eS6 (124 aa).

This sequence belongs to the eukaryotic ribosomal protein eS6 family.

This Methanococcus maripaludis (strain C6 / ATCC BAA-1332) protein is Small ribosomal subunit protein eS6.